The chain runs to 699 residues: D-(-)-3-hydroxybutyrate oligomer hydrolase (699 aa).

The N-terminal stretch at 1–33 is a signal peptide; sequence MTAIRGGSRRAPGLALALLGGVLLGACHGDENA. Residue Ser311 is the Charge relay system of the active site.

Belongs to the D-(-)-3-hydroxybutyrate oligomer hydrolase family.

The protein resides in the secreted. It carries out the reaction (3R)-hydroxybutanoate dimer + H2O = 2 (R)-3-hydroxybutanoate + H(+). The protein operates within lipid metabolism; butanoate metabolism. Its function is as follows. Participates in the degradation of poly-3-hydroxybutyrate (PHB). It works downstream of poly(3-hydroxybutyrate) depolymerase, hydrolyzing D(-)-3-hydroxybutyrate oligomers of various length (3HB-oligomers) into 3HB-monomers. This chain is D-(-)-3-hydroxybutyrate oligomer hydrolase, found in Burkholderia mallei (strain ATCC 23344).